The following is a 636-amino-acid chain: DNA mismatch repair protein MutL (636 aa).

Residues 341 to 420 (APLINKPEQQ…PGAEEYTPEA (80 aa)) are disordered. Basic and acidic residues predominate over residues 348-358 (EQQKLDFDQVR).

It belongs to the DNA mismatch repair MutL/HexB family.

This protein is involved in the repair of mismatches in DNA. It is required for dam-dependent methyl-directed DNA mismatch repair. May act as a 'molecular matchmaker', a protein that promotes the formation of a stable complex between two or more DNA-binding proteins in an ATP-dependent manner without itself being part of a final effector complex. This Bacillus licheniformis (strain ATCC 14580 / DSM 13 / JCM 2505 / CCUG 7422 / NBRC 12200 / NCIMB 9375 / NCTC 10341 / NRRL NRS-1264 / Gibson 46) protein is DNA mismatch repair protein MutL.